The chain runs to 293 residues: Phosphoribosylaminoimidazole-succinocarboxamide synthase (293 aa).

Belongs to the SAICAR synthetase family.

It catalyses the reaction 5-amino-1-(5-phospho-D-ribosyl)imidazole-4-carboxylate + L-aspartate + ATP = (2S)-2-[5-amino-1-(5-phospho-beta-D-ribosyl)imidazole-4-carboxamido]succinate + ADP + phosphate + 2 H(+). It participates in purine metabolism; IMP biosynthesis via de novo pathway; 5-amino-1-(5-phospho-D-ribosyl)imidazole-4-carboxamide from 5-amino-1-(5-phospho-D-ribosyl)imidazole-4-carboxylate: step 1/2. The sequence is that of Phosphoribosylaminoimidazole-succinocarboxamide synthase from Desulfosudis oleivorans (strain DSM 6200 / JCM 39069 / Hxd3) (Desulfococcus oleovorans).